The sequence spans 416 residues: Homogentisate 1,2-dioxygenase (416 aa).

The active-site Proton acceptor is His-275. Residues His-318 and Glu-324 each coordinate Fe cation. Residues Tyr-333 and His-354 each coordinate homogentisate. His-354 contributes to the Fe cation binding site.

It belongs to the homogentisate dioxygenase family. Hexamer; dimer of trimers. Requires Fe cation as cofactor.

The enzyme catalyses homogentisate + O2 = 4-maleylacetoacetate + H(+). It participates in amino-acid degradation; L-phenylalanine degradation; acetoacetate and fumarate from L-phenylalanine: step 4/6. Involved in the catabolism of homogentisate (2,5-dihydroxyphenylacetate or 2,5-OH-PhAc), a central intermediate in the degradation of phenylalanine and tyrosine. Catalyzes the oxidative ring cleavage of the aromatic ring of homogentisate to yield maleylacetoacetate. The sequence is that of Homogentisate 1,2-dioxygenase from Legionella pneumophila (strain Lens).